Reading from the N-terminus, the 266-residue chain is Glutamate racemase (266 aa).

Substrate is bound by residues 9–10 (DS) and 41–42 (YG). The Proton donor/acceptor role is filled by Cys72. Substrate is bound at residue 73–74 (NT). Cys184 functions as the Proton donor/acceptor in the catalytic mechanism. 185–186 (TH) lines the substrate pocket.

Belongs to the aspartate/glutamate racemases family. In terms of assembly, homodimer.

It carries out the reaction L-glutamate = D-glutamate. It functions in the pathway cell wall biogenesis; peptidoglycan biosynthesis. Functionally, provides the (R)-glutamate required for cell wall biosynthesis. The chain is Glutamate racemase from Staphylococcus aureus (strain MRSA252).